A 230-amino-acid polypeptide reads, in one-letter code: Phosducin-like protein 1 (230 aa).

The residue at position 1 (Met1) is an N-acetylmethionine. The 151-residue stretch at 16-166 folds into the Phosducin domain; sequence AEKDKHTTVD…VVGYKNGLEK (151 aa). A coiled-coil region spans residues 25 to 79; sequence DSDDKSSGEENLDELLNELDRELDEDHEFLSAYRSERLQQISDHLKQVKKNVEDD. Residues 81–230 are thioredoxin fold; it reads YGRLQCIDNE…RSESDSDLDI (150 aa).

Belongs to the phosducin family. In terms of assembly, interacts with the G protein beta-gamma subunit complex (STE4-STE18 complex).

The protein localises to the cytoplasm. Not essential for growth. Inhibits early G-protein signaling events following pheromone stimulation. May help create heterodimerizable beta-tubulin by facilitating the efficient transfer of nascent beta-tubulin polypeptides to the folding apparatus. The polypeptide is Phosducin-like protein 1 (PLP1) (Saccharomyces cerevisiae (strain ATCC 204508 / S288c) (Baker's yeast)).